Reading from the N-terminus, the 412-residue chain is Transforming growth factor beta-3 proprotein (412 aa).

Positions 1 to 23 (MKMHLQRALVVLALLNFATVSLS) are cleaved as a signal peptide. N-linked (GlcNAc...) asparagine glycans are attached at residues Asn-74, Asn-135, and Asn-142. The Cell attachment site signature appears at 261-263 (RGD). The residue at position 293 (Gln-293) is an N5-methylglutamine. Disulfide bonds link Cys-307–Cys-316, Cys-315–Cys-378, Cys-344–Cys-409, and Cys-348–Cys-411.

This sequence belongs to the TGF-beta family. In terms of assembly, interacts with ASPN. Latency-associated peptide: Homodimer; disulfide-linked. Latency-associated peptide: Interacts with Transforming growth factor beta-3 (TGF-beta-3) chain; interaction is non-covalent and maintains (TGF-beta-3) in a latent state. Latency-associated peptide: Interacts with LRRC32/GARP; leading to regulate activation of TGF-beta-3 and promote epithelial fusion during palate development. Latency-associated peptide: Interacts (via cell attachment site) with integrins, leading to release of the active TGF-beta-3. Transforming growth factor beta-3: Homodimer; disulfide-linked. Transforming growth factor beta-3: Interacts with TGF-beta receptors (TGFBR1 and TGFBR2), leading to signal transduction. Post-translationally, transforming growth factor beta-3 proprotein: The precursor proprotein is cleaved in the Golgi apparatus to form Transforming growth factor beta-3 (TGF-beta-3) and Latency-associated peptide (LAP) chains, which remain non-covalently linked, rendering TGF-beta-3 inactive. Methylated at Gln-293 by N6AMT1.

The protein resides in the secreted. It localises to the extracellular space. It is found in the extracellular matrix. Transforming growth factor beta-3 proprotein: Precursor of the Latency-associated peptide (LAP) and Transforming growth factor beta-3 (TGF-beta-3) chains, which constitute the regulatory and active subunit of TGF-beta-3, respectively. In terms of biological role, required to maintain the Transforming growth factor beta-3 (TGF-beta-3) chain in a latent state during storage in extracellular matrix. Associates non-covalently with TGF-beta-3 and regulates its activation via interaction with 'milieu molecules', such as LTBP1 and LRRC32/GARP, that control activation of TGF-beta-3. Interaction with integrins results in distortion of the Latency-associated peptide chain and subsequent release of the active TGF-beta-3. Its function is as follows. Transforming growth factor beta-3: Multifunctional protein that regulates embryogenesis and cell differentiation and is required in various processes such as secondary palate development. Activation into mature form follows different steps: following cleavage of the proprotein in the Golgi apparatus, Latency-associated peptide (LAP) and Transforming growth factor beta-3 (TGF-beta-3) chains remain non-covalently linked rendering TGF-beta-3 inactive during storage in extracellular matrix. At the same time, LAP chain interacts with 'milieu molecules', such as LTBP1 and LRRC32/GARP that control activation of TGF-beta-3 and maintain it in a latent state during storage in extracellular milieus. TGF-beta-3 is released from LAP by integrins: integrin-binding results in distortion of the LAP chain and subsequent release of the active TGF-beta-3. Once activated following release of LAP, TGF-beta-3 acts by binding to TGF-beta receptors (TGFBR1 and TGFBR2), which transduce signal. The polypeptide is Transforming growth factor beta-3 proprotein (TGFB3) (Homo sapiens (Human)).